Consider the following 1969-residue polypeptide: Cytadherence high molecular weight protein 1 (1969 aa).

The HAT 1 repeat unit spans residues 148-166 (YYDENEEWVWTGYFDEDNK). The segment at 174–244 (KPAEVEALEE…QPESEQEGSG (71 aa)) is disordered. Composition is skewed to acidic residues over residues 179–207 (EALEEESEATEEVVEQEPQEEVQAEEVVE) and 214–242 (QPEEEVAAEEYAEAAQEEYEEQPESEQEG). HAT repeat units follow at residues 258–278 (YYDENNDWVWTGYFDENNNFV), 300–331 (AQQEQVQEEYEQQPEQEGSGEYWEQFVGVEGY), and 333–353 (YYDENNDWVWTGYFDENNNFV). The interval 294–319 (QVEEYSAQQEQVQEEYEQQPEQEGSG) is disordered. A disordered region spans residues 365 to 393 (VSEEQYSESVSEEQEPASEEQVAEEPAQV). Acidic residues predominate over residues 374–387 (VSEEQEPASEEQVA). HAT repeat units follow at residues 477–497 (YYDENNEWVWKGYFNEYGMFI) and 959–997 (LTLVEEEPFFNKFIGNEQYGYYNNKNVWIWTGYFDDQNN). Positions 1000–1027 (SDKDSKTQKVDQLIEEFNKQEAIKKTEE) form a coiled coil. An HAT 7 repeat occupies 1029-1067 (EAKKASEPFYNKYIGNKQFGYYNDKNVWIWNGYFDENDQ). Coiled coils occupy residues 1082–1190 (IEDE…FDNF), 1547–1621 (SVNQ…LALT), and 1758–1790 (NRGDYKFVQEQIQELRAEHANKTRAISFYNKKV).

It is found in the cell projection. The protein resides in the attachment organelle membrane. In terms of biological role, component of the cytoskeleton-like structure which stabilizes the shape of the wall-less Mycoplasma. This cytoskeleton-like network of accessory proteins containing HMW proteins 1 to 5 allows the proper anchoring of cytadhesin proteins in the mycoplasmal membrane at the attachment organelle. This Mycoplasmoides gallisepticum (strain R(low / passage 15 / clone 2)) (Mycoplasma gallisepticum) protein is Cytadherence high molecular weight protein 1 (hlp1).